A 700-amino-acid chain; its full sequence is MAGIAAKLAKDREAAEGLGSHDRAIKYLNQDYEALRNECLEAGTLFQDPSFPAIPSALGFKELGPYSSKTRGIEWKRPTEICADPQFIIGGATRTDICQGALGDCWLLAAIASLTLNEEILARVVPLNQSFQENYAGIFHFQFWQYGEWVEVVVDDRLPTKDGELLFVHSAEGSEFWSALLEKAYAKINGCYEALSGGATTEGFEDFTGGIAEWYELKKPPPNLFKIIQKALQKGSLLGCSIDITSAADSEAITFQKLVKGHAYSVTGAEEVESNGSLQKLIRIRNPWGEVEWTGRWNDNCPSWNTIDPEERERLTRRHEDGEFWMSFSDFLRHYSRLEICNLTPDTLTSDTYKKWKLTKMDGNWRRGSTAGGCRNYPNTFWMNPQYLIKLEEEDEDEEDGESGCTFLVGLIQKHRRRQRKMGEDMHTIGFGIYEVPEELSGQTNIHLSKNFFLTNRARERSDTFINLREVLNRFKLPPGEYILVPSTFEPNKDGDFCIRVFSEKKADYQAVDDEIEANLEEFDISEDDIDDGFRRLFAQLAGEDAEISAFELQTILRRVLAKRQDIKSDGFSIETCKIMVDMLDSDGSGKLGLKEFYILWTKIQKYQKIYREIDVDRSGTMNSYEMRKALEEAGFKMPCQLHQVIVARFADDQLIIDFDNFVRCLVRLETLFKIFKQLDPENTGTIELDLISWLCFSVL.

The residue at position 2 (A2) is an N-acetylalanine. Positions 2–19 (AGIAAKLAKDREAAEGLG) are cleaved as a propeptide — anchors to the small subunit. The 300-residue stretch at 45–344 (LFQDPSFPAI…YSRLEICNLT (300 aa)) folds into the Calpain catalytic domain. Residues I89, G91, and D96 each coordinate Ca(2+). C105 is an active-site residue. Ca(2+)-binding residues include E175, Q229, and K230. Residues H262 and N286 contribute to the active site. Residues E292, D299, and E323 each coordinate Ca(2+). The interval 345 to 514 (PDTLTSDTYK…KKADYQAVDD (170 aa)) is domain III. A linker region spans residues 515 to 529 (EIEANLEEFDISEDD). Residues 530 to 700 (IDDGFRRLFA…LISWLCFSVL (171 aa)) form a domain IV region. Positions 542, 545, 547, 552, 585, 587, 589, 591, 596, 615, 617, 619, 621, 626, 658, and 661 each coordinate Ca(2+). 2 EF-hand domains span residues 572–605 (FSIE…TKIQ) and 602–637 (TKIQ…AGFK). The 34-residue stretch at 667–700 (VRLETLFKIFKQLDPENTGTIELDLISWLCFSVL) folds into the EF-hand 3 domain.

Belongs to the peptidase C2 family. As to quaternary structure, forms a heterodimer with a small (regulatory) subunit (CAPNS1). Interacts with CPEB3; this leads to cleavage of CPEB3. Interacts with PIDD1 alternative open reading frame protein altPIDD1. Ca(2+) is required as a cofactor. Ubiquitous.

Its subcellular location is the cytoplasm. It is found in the cell membrane. It carries out the reaction Broad endopeptidase specificity.. With respect to regulation, activated by 200-1000 micromolar concentrations of calcium and inhibited by calpastatin. Calcium-regulated non-lysosomal thiol-protease which catalyzes limited proteolysis of substrates involved in cytoskeletal remodeling and signal transduction. Proteolytically cleaves MYOC at 'Arg-226'. Proteolytically cleaves CPEB3 following neuronal stimulation which abolishes CPEB3 translational repressor activity, leading to translation of CPEB3 target mRNAs. The sequence is that of Calpain-2 catalytic subunit (CAPN2) from Homo sapiens (Human).